The sequence spans 253 residues: Core protein VP8 (253 aa).

Positions 1 to 31 are excised as a propeptide; it reads MNDLLLENLFGEKALCAQVTRDQLLEIIAAG.

It belongs to the chordopoxvirinae VP8 family. In terms of processing, undergoes morphogenesis-associated proteolysis which cleaves the 28 kDa to a 25-kDa product. Proteolytic cleavage of major core proteins P4a (A10L), P4b (A3L), and VP8 (L4R), which occurs at a late stage of core formation, is required for production of infectious mature virions (MV).

It is found in the virion. Major core structural protein. This is Core protein VP8 from Vertebrata (FPV).